Here is a 493-residue protein sequence, read N- to C-terminus: Hexokinase (493 aa).

The Hexokinase domain maps to 27 to 481 (EELSWRINKF…SGKGAAITAA (455 aa)). The tract at residues 91–239 (TGQEKGTYYA…AIPAKVCCVL (149 aa)) is hexokinase small subdomain. Position 102 to 107 (102 to 107 (DFGGTN)) interacts with ATP. The tract at residues 177 to 203 (SVGFTFSFPCTSPSINCSILIDWTKGF) is glucose-binding. A hexokinase large subdomain region spans residues 240 to 470 (NDAVGTLMSC…ENLIIIPADD (231 aa)).

The protein belongs to the hexokinase family.

The catalysed reaction is a D-hexose + ATP = a D-hexose 6-phosphate + ADP + H(+). The enzyme catalyses D-mannose + ATP = D-mannose 6-phosphate + ADP + H(+). It catalyses the reaction D-fructose + ATP = D-fructose 6-phosphate + ADP + H(+). It carries out the reaction D-glucose + ATP = D-glucose 6-phosphate + ADP + H(+). Its pathway is carbohydrate metabolism; hexose metabolism. It functions in the pathway carbohydrate degradation; glycolysis; D-glyceraldehyde 3-phosphate and glycerone phosphate from D-glucose: step 1/4. Catalyzes the phosphorylation of various hexoses to hexose 6-phosphate. In Plasmodium falciparum, this protein is Hexokinase (HK).